An 877-amino-acid polypeptide reads, in one-letter code: Dolichyl-phosphate-mannose--protein mannosyltransferase 1 (877 aa).

N-linked (GlcNAc...) asparagine glycosylation is present at Asn83. A run of 2 helical transmembrane segments spans residues 109-129 (FFMD…GAIG) and 150-170 (YIFM…LCYL). N-linked (GlcNAc...) asparagine glycosylation occurs at Asn195. A run of 4 helical transmembrane segments spans residues 196–216 (VTIS…AAAI), 226–246 (IPFT…LGLA), 252–272 (VGLF…WFLI), and 291–311 (IILL…HFQL). The 55-residue stretch at 340-394 (TEQVGLGSVVTIRHVDTQGGYLHSHEHFYQTGSKQQQITLYPHLDSNNKWLIEPY) folds into the MIR 1 domain. N-linked (GlcNAc...) asparagine glycosylation is found at Asn395 and Asn400. MIR domains lie at 403–462 (FVPL…VEIV) and 472–528 (QTFV…IETN). The next 4 membrane-spanning stretches (helical) occupy residues 604 to 624 (TWWA…VTVF), 643 to 663 (VQTF…FIMG), 666 to 686 (LFLH…GHFF), and 700 to 720 (FQQV…VFYV). N-linked (GlcNAc...) asparagine glycosylation occurs at Asn721. Residues 778–877 (VVEAKQTPKA…EDESVHQVQQ (100 aa)) are disordered. Basic and acidic residues-rich tracts occupy residues 783–799 (QTPK…DHIE), 807–816 (VEEKEVKEEV), and 847–857 (NDEKSVEEKQQ).

This sequence belongs to the glycosyltransferase 39 family. PMT1 and PMT2 form a functional heterodimer.

It is found in the endoplasmic reticulum membrane. It catalyses the reaction a di-trans,poly-cis-dolichyl beta-D-mannosyl phosphate + L-seryl-[protein] = 3-O-(alpha-D-mannosyl)-L-seryl-[protein] + a di-trans,poly-cis-dolichyl phosphate + H(+). The catalysed reaction is a di-trans,poly-cis-dolichyl beta-D-mannosyl phosphate + L-threonyl-[protein] = 3-O-(alpha-D-mannosyl)-L-threonyl-[protein] + a di-trans,poly-cis-dolichyl phosphate + H(+). Its pathway is protein modification; protein glycosylation. In terms of biological role, protein mannosyltransferase (PMT) involved in hyphal growth and drug sensitivity. Transfers mannose from Dol-P-mannose to Ser or Thr residues on proteins. PMT1, PMT2 and PMT4 account for most of the protein-O-glycosylation activity, while PMT5 and PMT6 may specifically modulate a much narrower spectrum of target proteins. Accounts for the O-glycosylation of the cell wall proteins KRE9, PIR2, RHD3, and ALS1, as well as the SEC20 t-SNARE component. O-glycosylation of SEC20 is essential for its stability. Required for filamentation and early phases of biofilm formation. The protein is Dolichyl-phosphate-mannose--protein mannosyltransferase 1 (PMT1) of Candida albicans (strain SC5314 / ATCC MYA-2876) (Yeast).